Consider the following 425-residue polypeptide: Serine--tRNA ligase (425 aa).

230 to 232 (TAE) contributes to the L-serine binding site. 261–263 (RSE) contributes to the ATP binding site. L-serine is bound at residue Glu284. Position 348-351 (348-351 (EISS)) interacts with ATP. Ser384 lines the L-serine pocket.

It belongs to the class-II aminoacyl-tRNA synthetase family. Type-1 seryl-tRNA synthetase subfamily. Homodimer. The tRNA molecule binds across the dimer.

Its subcellular location is the cytoplasm. It catalyses the reaction tRNA(Ser) + L-serine + ATP = L-seryl-tRNA(Ser) + AMP + diphosphate + H(+). The catalysed reaction is tRNA(Sec) + L-serine + ATP = L-seryl-tRNA(Sec) + AMP + diphosphate + H(+). It participates in aminoacyl-tRNA biosynthesis; selenocysteinyl-tRNA(Sec) biosynthesis; L-seryl-tRNA(Sec) from L-serine and tRNA(Sec): step 1/1. Its function is as follows. Catalyzes the attachment of serine to tRNA(Ser). Is also able to aminoacylate tRNA(Sec) with serine, to form the misacylated tRNA L-seryl-tRNA(Sec), which will be further converted into selenocysteinyl-tRNA(Sec). This chain is Serine--tRNA ligase, found in Streptococcus equi subsp. zooepidemicus (strain H70).